The primary structure comprises 419 residues: MMFNNENYKDYDQELWEAIQAEEDRQEHNIELIASENMVSKAVMQAQGSVLTNKYAEGYPSKRYYGGTEYVDIVESLAIERAKKLFGAAYANVQPHSGSQANAAAYMALINAGDTVLGMDLAAGGHLTHGSPVNFSGKTYQFVGYTVDKETEKLDYAAILKQAKAVQPKLIVAGASAYSRQIDFEQFRFIADQVGAYLMVDMAHIAGLVAAGLHQNPVPYAHIVTSTTHKTLRGPRGGLLLTNDEAIARKMNAAIFPGLQGGPLEHVIAAKAVAFKEALDPAFTDYARAVIANTAAMAEVFAKDDRFRLISGGTDNHLFLVDVTKVIENGKLAQALLDEVNITLNKNAIPFETLSPFKTSGIRIGCAAITSRGMGVDESRTIAHLIIKALVNHQQPEILEEVRYEVRRLTDAFPLYKKN.

(6S)-5,6,7,8-tetrahydrofolate contacts are provided by residues L121 and 125–127 (GHL). Residue K230 is modified to N6-(pyridoxal phosphate)lysine. 355–357 (SPF) provides a ligand contact to (6S)-5,6,7,8-tetrahydrofolate.

It belongs to the SHMT family. As to quaternary structure, homodimer. It depends on pyridoxal 5'-phosphate as a cofactor.

The protein localises to the cytoplasm. It catalyses the reaction (6R)-5,10-methylene-5,6,7,8-tetrahydrofolate + glycine + H2O = (6S)-5,6,7,8-tetrahydrofolate + L-serine. The protein operates within one-carbon metabolism; tetrahydrofolate interconversion. It participates in amino-acid biosynthesis; glycine biosynthesis; glycine from L-serine: step 1/1. Catalyzes the reversible interconversion of serine and glycine with tetrahydrofolate (THF) serving as the one-carbon carrier. This reaction serves as the major source of one-carbon groups required for the biosynthesis of purines, thymidylate, methionine, and other important biomolecules. Also exhibits THF-independent aldolase activity toward beta-hydroxyamino acids, producing glycine and aldehydes, via a retro-aldol mechanism. In Streptococcus equi subsp. zooepidemicus (strain H70), this protein is Serine hydroxymethyltransferase.